The sequence spans 313 residues: Caffeic acid 3-O-methyltransferase (313 aa).

A substrate-binding site is contributed by 112–118 (IDQDRVF). Positions 144–162 (AFDYPGTDPRFNKIFNRAM) are substrate binding. Positions 190, 213, 233, 234, and 247 each coordinate S-adenosyl-L-methionine. Histidine 251 acts as the Proton acceptor in catalysis.

The protein belongs to the class I-like SAM-binding methyltransferase superfamily. Cation-independent O-methyltransferase family. COMT subfamily. In terms of assembly, homodimer.

The enzyme catalyses (E)-caffeate + S-adenosyl-L-methionine = (E)-ferulate + S-adenosyl-L-homocysteine + H(+). It functions in the pathway aromatic compound metabolism; phenylpropanoid biosynthesis. In terms of biological role, catalyzes the conversion of caffeic acid to ferulic acid and of 5-hydroxyferulic acid to sinapic acid. The resulting products may subsequently be converted to the corresponding alcohols that are incorporated into lignins. This chain is Caffeic acid 3-O-methyltransferase (COMT1), found in Eucalyptus globulus (Tasmanian blue gum).